Reading from the N-terminus, the 183-residue chain is Ribosome-recycling factor (183 aa).

It belongs to the RRF family.

It localises to the cytoplasm. Functionally, responsible for the release of ribosomes from messenger RNA at the termination of protein biosynthesis. May increase the efficiency of translation by recycling ribosomes from one round of translation to another. The protein is Ribosome-recycling factor of Acetivibrio thermocellus (strain ATCC 27405 / DSM 1237 / JCM 9322 / NBRC 103400 / NCIMB 10682 / NRRL B-4536 / VPI 7372) (Clostridium thermocellum).